A 148-amino-acid polypeptide reads, in one-letter code: Universal stress protein YxiE (148 aa).

Positions 1 to 18 (MFNKMLVAIDGSDMSAKA) are cleaved as a signal peptide.

The protein belongs to the universal stress protein A family.

The sequence is that of Universal stress protein YxiE (yxiE) from Bacillus subtilis (strain 168).